A 264-amino-acid chain; its full sequence is Sirohydrochlorin cobaltochelatase (264 aa).

6 residues coordinate Co-sirohydrochlorin: Gly45, Ile84, Ile85, Asp88, Glu89, and Lys92. The Proton acceptor role is filled by His145. The Co(2+) site is built by His145 and Glu175. Residues Leu202, Val203, and His207 each coordinate Co-sirohydrochlorin. Residue His207 participates in Co(2+) binding.

The protein belongs to the CbiK family. As to quaternary structure, homotrimer.

It carries out the reaction Co-sirohydrochlorin + 2 H(+) = sirohydrochlorin + Co(2+). The catalysed reaction is Co-precorrin-2 + 3 H(+) = precorrin-2 + Co(2+). The protein operates within cofactor biosynthesis; adenosylcobalamin biosynthesis; cob(II)yrinate a,c-diamide from sirohydrochlorin (anaerobic route): step 1/10. Its function is as follows. Cobalt chelatase responsible for the insertion of cobalt during anaerobic cobalamin biosynthesis. Can catalyze the insertion of Co(2+) into either sirohydrochlorin or precorrin-2. It is not clear which is the natural substrate in Salmonella. The sequence is that of Sirohydrochlorin cobaltochelatase from Salmonella typhimurium (strain LT2 / SGSC1412 / ATCC 700720).